The sequence spans 575 residues: Transcription factor collier (575 aa).

An interaction with DNA region spans residues 79–82; it reads RKSN. The C5-type zinc-finger motif lies at 167–186; it reads CRVLLTHEVMCSRCCDKKSC. Interaction with DNA regions lie at residues 213–220 and 252–255; these read NCLKNAGN and NNSK. The interval 255–278 is disordered; the sequence is KHGRRAKRLDTTEGTGNTSLSISG. Over residues 266-276 the composition is skewed to polar residues; the sequence is TEGTGNTSLSI. Residues 299 to 382 enclose the IPT/TIG domain; it reads PCIKAISPSE…KGSPGRFVYV (84 aa). Disordered regions lie at residues 456–492 and 546–575; these read GQWT…GSYG and AATA…AAAV. Low complexity predominate over residues 479-492; sequence SSASTPHSSGGSYG. Basic residues predominate over residues 546–557; sequence AATAHPHHHYPH. The segment covering 561–575 has biased composition (low complexity); it reads PWHNPAVSAATAAAV.

It belongs to the COE family. In terms of tissue distribution, its expression at the blastoderm stage is restricted to a single stripe of cells corresponding to part of the intercalary and mandibular segment primordia, possibly parasegment O.

The protein localises to the nucleus. May act as a 'second-level regulator' of head patterning. Required for establishment of the PS(-1)/PS0 parasegmental border and formation of the intercalary segment. Required for expression of the segment polarity genes hedgehog, engrailed and wingless, and the segment-identity genes CAP and collar in the intercalary segment. Required at the onset of the gastrulation for the correct formation of the mandibular segment. The sequence is that of Transcription factor collier (kn) from Drosophila melanogaster (Fruit fly).